Here is a 261-residue protein sequence, read N- to C-terminus: Imidazole glycerol phosphate synthase subunit HisF (261 aa).

Catalysis depends on residues aspartate 11 and aspartate 130.

This sequence belongs to the HisA/HisF family. In terms of assembly, heterodimer of HisH and HisF.

The protein resides in the cytoplasm. It carries out the reaction 5-[(5-phospho-1-deoxy-D-ribulos-1-ylimino)methylamino]-1-(5-phospho-beta-D-ribosyl)imidazole-4-carboxamide + L-glutamine = D-erythro-1-(imidazol-4-yl)glycerol 3-phosphate + 5-amino-1-(5-phospho-beta-D-ribosyl)imidazole-4-carboxamide + L-glutamate + H(+). It participates in amino-acid biosynthesis; L-histidine biosynthesis; L-histidine from 5-phospho-alpha-D-ribose 1-diphosphate: step 5/9. IGPS catalyzes the conversion of PRFAR and glutamine to IGP, AICAR and glutamate. The HisF subunit catalyzes the cyclization activity that produces IGP and AICAR from PRFAR using the ammonia provided by the HisH subunit. This is Imidazole glycerol phosphate synthase subunit HisF from Jannaschia sp. (strain CCS1).